We begin with the raw amino-acid sequence, 133 residues long: Fatty acid-binding protein, heart (133 aa).

An N-acetylvaline modification is found at Val2. Residue Thr8 is modified to Phosphothreonine. Tyr20 is subject to Phosphotyrosine; by Tyr-kinases. A Phosphoserine modification is found at Ser23. Position 30 is a phosphothreonine (Thr30). Ser83 carries the post-translational modification Phosphoserine. Position 127-129 (127-129 (RTY)) interacts with (9Z)-octadecenoate. A hexadecanoate-binding site is contributed by 127–129 (RTY). 127–129 (RTY) is an octadecanoate binding site.

This sequence belongs to the calycin superfamily. Fatty-acid binding protein (FABP) family.

It localises to the cytoplasm. Functionally, FABPs are thought to play a role in the intracellular transport of long-chain fatty acids and their acyl-CoA esters. This chain is Fatty acid-binding protein, heart (FABP3), found in Bos mutus grunniens (Wild yak).